The chain runs to 203 residues: Large ribosomal subunit protein bL25 (203 aa).

This sequence belongs to the bacterial ribosomal protein bL25 family. CTC subfamily. In terms of assembly, part of the 50S ribosomal subunit; part of the 5S rRNA/L5/L18/L25 subcomplex. Contacts the 5S rRNA. Binds to the 5S rRNA independently of L5 and L18.

This is one of the proteins that binds to the 5S RNA in the ribosome where it forms part of the central protuberance. The chain is Large ribosomal subunit protein bL25 from Cupriavidus metallidurans (strain ATCC 43123 / DSM 2839 / NBRC 102507 / CH34) (Ralstonia metallidurans).